We begin with the raw amino-acid sequence, 803 residues long: Protein AMEIOTIC 1 homolog (803 aa).

Disordered regions lie at residues 21–64 (RPQV…QSLS) and 264–333 (RLRQ…RWSA). Positions 39-50 (NGKDDANHDESK) are enriched in basic and acidic residues. Residues 51-64 (NQSPGLPLSRQSLS) are compositionally biased toward polar residues. A compositionally biased stretch (basic and acidic residues) spans 283–295 (KREEAESSMDKSR). Residues 296 to 313 (AARKKKAKTYKSPKKVEK) show a composition bias toward basic residues. Positions 314-333 (RRVVEAKDGDPRRGKDRWSA) are enriched in basic and acidic residues. Positions 450–567 (VKKKVEELAE…SSFLSLKEQL (118 aa)) form a coiled coil. Residues 651–688 (ISGGGSSSCPVASGPEQLPRSSSCPSIGPGGLPPSSRA) form a disordered region.

The protein localises to the nucleus. The protein resides in the chromosome. Functionally, plays a fundamental role in building the proper chromosome structure at the beginning of meiosis in male meiocytes. Required for the transition from leptotene to zygotene in meiocytes. Required for homologous chromosome pairing. This Oryza sativa subsp. japonica (Rice) protein is Protein AMEIOTIC 1 homolog.